A 436-amino-acid chain; its full sequence is 3-phosphoshikimate 1-carboxyvinyltransferase (436 aa).

3 residues coordinate 3-phosphoshikimate: lysine 22, serine 23, and arginine 27. Lysine 22 provides a ligand contact to phosphoenolpyruvate. Phosphoenolpyruvate-binding residues include glycine 95 and arginine 123. Residues serine 170, serine 171, glutamine 172, serine 201, aspartate 322, and lysine 349 each coordinate 3-phosphoshikimate. Glutamine 172 lines the phosphoenolpyruvate pocket. Residue aspartate 322 is the Proton acceptor of the active site. 3 residues coordinate phosphoenolpyruvate: arginine 353, arginine 397, and lysine 422.

Belongs to the EPSP synthase family. Monomer.

The protein localises to the cytoplasm. It carries out the reaction 3-phosphoshikimate + phosphoenolpyruvate = 5-O-(1-carboxyvinyl)-3-phosphoshikimate + phosphate. Its pathway is metabolic intermediate biosynthesis; chorismate biosynthesis; chorismate from D-erythrose 4-phosphate and phosphoenolpyruvate: step 6/7. Functionally, catalyzes the transfer of the enolpyruvyl moiety of phosphoenolpyruvate (PEP) to the 5-hydroxyl of shikimate-3-phosphate (S3P) to produce enolpyruvyl shikimate-3-phosphate and inorganic phosphate. This Ralstonia nicotianae (strain ATCC BAA-1114 / GMI1000) (Ralstonia solanacearum) protein is 3-phosphoshikimate 1-carboxyvinyltransferase.